The sequence spans 132 residues: Small ribosomal subunit protein uS8 (132 aa).

It belongs to the universal ribosomal protein uS8 family. Part of the 30S ribosomal subunit. Contacts proteins S5 and S12.

Functionally, one of the primary rRNA binding proteins, it binds directly to 16S rRNA central domain where it helps coordinate assembly of the platform of the 30S subunit. The chain is Small ribosomal subunit protein uS8 from Chelativorans sp. (strain BNC1).